A 290-amino-acid polypeptide reads, in one-letter code: Putative speedy protein-like protein 3 (290 aa).

A disordered region spans residues 16–50; sequence GVDPSPPCRSLGWKRKKEWSDESEEEPEKELAPEP. Acidic residues predominate over residues 36–50; sequence DESEEEPEKELAPEP.

It belongs to the Speedy/Ringo family.

This is Putative speedy protein-like protein 3 from Homo sapiens (Human).